Consider the following 37-residue polypeptide: Large ribosomal subunit protein bL36B (37 aa).

Belongs to the bacterial ribosomal protein bL36 family.

The chain is Large ribosomal subunit protein bL36B from Kineococcus radiotolerans (strain ATCC BAA-149 / DSM 14245 / SRS30216).